Consider the following 217-residue polypeptide: Octanoyltransferase (217 aa).

The 183-residue stretch at S34 to R216 folds into the BPL/LPL catalytic domain. Residues R73 to H80, A140 to G142, and G153 to S155 contribute to the substrate site. The active-site Acyl-thioester intermediate is the C171.

This sequence belongs to the LipB family.

Its subcellular location is the cytoplasm. The enzyme catalyses octanoyl-[ACP] + L-lysyl-[protein] = N(6)-octanoyl-L-lysyl-[protein] + holo-[ACP] + H(+). The protein operates within protein modification; protein lipoylation via endogenous pathway; protein N(6)-(lipoyl)lysine from octanoyl-[acyl-carrier-protein]: step 1/2. Catalyzes the transfer of endogenously produced octanoic acid from octanoyl-acyl-carrier-protein onto the lipoyl domains of lipoate-dependent enzymes. Lipoyl-ACP can also act as a substrate although octanoyl-ACP is likely to be the physiological substrate. This Halorhodospira halophila (strain DSM 244 / SL1) (Ectothiorhodospira halophila (strain DSM 244 / SL1)) protein is Octanoyltransferase.